The sequence spans 86 residues: UPF0147 protein PYRAB16980 (86 aa).

This sequence belongs to the UPF0147 family.

This is UPF0147 protein PYRAB16980 from Pyrococcus abyssi (strain GE5 / Orsay).